We begin with the raw amino-acid sequence, 499 residues long: MANDSSTDGRFSEKLRVPEALTFDDVLLRPAESRVEPDDADVATRVSTNVELEVPVLSAAMDTVTESRLAIAMAREGGLGVLHQNMDTDRVVAEVERVKRADELVIDRENVVTAAPEQTVEAVDEMMDRSDVSGAPVVDDDDTVRGIISATDIRPYLEVGESDAVREAMTDEVITAPEDITARDALELMYEHKIERVPIVNDEQHLVGLVTMQGILERREHGSAARDQNGRLRVGVAVGPFDTERATAVDEAGADVLFIDCAHAHNLNVIDSAREIKASVDADVVVGNVGTREAAEAVVDFADGIKVGIGPGSICTTRVVTGSGMPQITAVSQVADVAAPAGVPVIADGGIRYSGDAAKAIAAGADAVMLGSYFAGTDEAPGRVITMNGKKYKQYRGMGSVGAMQSGGSDRYLKDDDEDEEYVPEGVEAATPYKGSLASELHQLVGGIQSGMGYVGAESIPAFKADAEFVRVSAAGQTEGHPHDVMITDEAPNYSPQGE.

CBS domains lie at 106 to 165 (IDRE…SDAV) and 169 to 225 (MTDE…GSAA). NAD(+) is bound by residues Asp260 and 308 to 310 (GIG). Positions 310 and 312 each coordinate K(+). Ser313 provides a ligand contact to IMP. K(+) is bound at residue Cys315. The active-site Thioimidate intermediate is Cys315. IMP contacts are provided by residues 348 to 350 (DGG), 371 to 372 (GS), and 395 to 399 (YRGMG). Catalysis depends on Arg411, which acts as the Proton acceptor. Glu425 provides a ligand contact to IMP. K(+) is bound by residues Glu479, Gly480, and His481. The tract at residues 480–499 (GHPHDVMITDEAPNYSPQGE) is disordered.

This sequence belongs to the IMPDH/GMPR family. As to quaternary structure, homotetramer. It depends on K(+) as a cofactor.

It carries out the reaction IMP + NAD(+) + H2O = XMP + NADH + H(+). It functions in the pathway purine metabolism; XMP biosynthesis via de novo pathway; XMP from IMP: step 1/1. With respect to regulation, mycophenolic acid (MPA) is a non-competitive inhibitor that prevents formation of the closed enzyme conformation by binding to the same site as the amobile flap. In contrast, mizoribine monophosphate (MZP) is a competitive inhibitor that induces the closed conformation. MPA is a potent inhibitor of mammalian IMPDHs but a poor inhibitor of the bacterial enzymes. MZP is a more potent inhibitor of bacterial IMPDH. Functionally, catalyzes the conversion of inosine 5'-phosphate (IMP) to xanthosine 5'-phosphate (XMP), the first committed and rate-limiting step in the de novo synthesis of guanine nucleotides, and therefore plays an important role in the regulation of cell growth. The sequence is that of Inosine-5'-monophosphate dehydrogenase from Halobacterium salinarum (strain ATCC 700922 / JCM 11081 / NRC-1) (Halobacterium halobium).